A 78-amino-acid chain; its full sequence is Large ribosomal subunit protein bL28 (78 aa).

The segment at 1–20 (MSRVCQVTGKRPAVGNNRSH) is disordered.

Belongs to the bacterial ribosomal protein bL28 family.

The chain is Large ribosomal subunit protein bL28 from Actinobacillus pleuropneumoniae serotype 7 (strain AP76).